A 443-amino-acid chain; its full sequence is Glutamyl-tRNA reductase (443 aa).

Substrate is bound by residues 49–52 (TCNR), Ser109, 114–116 (ETQ), and Gln120. Cys50 functions as the Nucleophile in the catalytic mechanism. 189–194 (GAGEMS) lines the NADP(+) pocket.

The protein belongs to the glutamyl-tRNA reductase family. In terms of assembly, homodimer.

The enzyme catalyses (S)-4-amino-5-oxopentanoate + tRNA(Glu) + NADP(+) = L-glutamyl-tRNA(Glu) + NADPH + H(+). It participates in porphyrin-containing compound metabolism; protoporphyrin-IX biosynthesis; 5-aminolevulinate from L-glutamyl-tRNA(Glu): step 1/2. Its function is as follows. Catalyzes the NADPH-dependent reduction of glutamyl-tRNA(Glu) to glutamate 1-semialdehyde (GSA). The protein is Glutamyl-tRNA reductase of Desulfitobacterium hafniense (strain DSM 10664 / DCB-2).